A 174-amino-acid chain; its full sequence is Transcription antitermination protein NusB (174 aa).

It belongs to the NusB family.

Involved in transcription antitermination. Required for transcription of ribosomal RNA (rRNA) genes. Binds specifically to the boxA antiterminator sequence of the ribosomal RNA (rrn) operons. The sequence is that of Transcription antitermination protein NusB from Rhodopseudomonas palustris (strain TIE-1).